The sequence spans 786 residues: Constitutive coactivator of peroxisome proliferator-activated receptor gamma (786 aa).

The segment at 1–561 is mediates transactivation of PPARG; sequence MGVRGLQGFV…GTPSLEVLWL (561 aa). Disordered regions lie at residues 371-413 and 738-786; these read PNQE…KLPS and HWDS…WRRY. A compositionally biased stretch (polar residues) spans 750-771; it reads QGYSSYRTDSTHGHSGQSWRNQ.

Belongs to the constitutive coactivator of PPAR-gamma family. As to quaternary structure, interacts with ESR1 and RXRA. Interacts with PPARG; in a ligand-independent manner. Ubiquitously expressed (at protein level).

Its subcellular location is the nucleus. Its function is as follows. Functions as a transactivator of PPARG and ESR1. Functions in adipogenesis through PPARG activation. The polypeptide is Constitutive coactivator of peroxisome proliferator-activated receptor gamma (Fam120b) (Mus musculus (Mouse)).